A 255-amino-acid polypeptide reads, in one-letter code: MSVISMKQLLEAGVHFGHQTRRWNPKMKPYIFTERNGIHVIDLQKTVKLVDDAYNYVKNASQEGAVVLFVGTKKQAAEAVKEEALRAGQYYVNHRWLGGMLTNWNTIQTRVTRLKEINKMEEEGTFEVLPKKEVVLLNKERERLEKFIGGIADMPRIPDVMYIVDPHAEQIAVKEAKTLGIPVVAMVDTNADPEPIDVVIPANDDAIRAVKLITAKMADAIIEGRQGEDAADDFVAEEAASEESLEELAEIVEGK.

The interval aspartate 233–lysine 255 is disordered.

It belongs to the universal ribosomal protein uS2 family.

The protein is Small ribosomal subunit protein uS2 (rpsB) of Lactococcus lactis subsp. lactis (strain IL1403) (Streptococcus lactis).